The chain runs to 298 residues: Quinolinate synthase (298 aa).

Iminosuccinate-binding residues include His-19 and Ser-36. Cys-81 lines the [4Fe-4S] cluster pocket. Iminosuccinate is bound by residues 107-109 (YVN) and Ser-124. Cys-168 contacts [4Fe-4S] cluster. Iminosuccinate contacts are provided by residues 193-195 (HPE) and Thr-210. Cys-254 provides a ligand contact to [4Fe-4S] cluster.

It belongs to the quinolinate synthase family. Type 2 subfamily. [4Fe-4S] cluster is required as a cofactor.

The protein localises to the cytoplasm. The catalysed reaction is iminosuccinate + dihydroxyacetone phosphate = quinolinate + phosphate + 2 H2O + H(+). It participates in cofactor biosynthesis; NAD(+) biosynthesis; quinolinate from iminoaspartate: step 1/1. Its activity is regulated as follows. Inhibited by 4,5 dithiohydroxyphthalic acid (DTHPA) analogs, which bind to the catalytic iron site of the [4Fe-4S] cluster. Functionally, catalyzes the condensation of iminoaspartate with dihydroxyacetone phosphate to form quinolinate. This is Quinolinate synthase from Thermotoga maritima (strain ATCC 43589 / DSM 3109 / JCM 10099 / NBRC 100826 / MSB8).